The following is a 299-amino-acid chain: Nucleotide-binding protein glr4163 (299 aa).

An ATP-binding site is contributed by 18–25 (SPAGAGRT).

Belongs to the RapZ-like family.

Displays ATPase and GTPase activities. The polypeptide is Nucleotide-binding protein glr4163 (Gloeobacter violaceus (strain ATCC 29082 / PCC 7421)).